The following is a 350-amino-acid chain: Arabinogalactan endo-beta-1,4-galactanase (350 aa).

Positions 1 to 16 (MFASLLLAALPLLTHA) are cleaved as a signal peptide. An N-linked (GlcNAc...) asparagine glycan is attached at Asn128. Glu152 (proton donor) is an active-site residue. Glu262 (nucleophile) is an active-site residue.

It belongs to the glycosyl hydrolase 53 family. In terms of processing, glycosylated.

The catalysed reaction is The enzyme specifically hydrolyzes (1-&gt;4)-beta-D-galactosidic linkages in type I arabinogalactans.. The chain is Arabinogalactan endo-beta-1,4-galactanase (gal1) from Aspergillus aculeatus.